The sequence spans 157 residues: uncharacterized protein (157 aa).

Disordered stretches follow at residues 76-105 (AINQ…GPRG) and 132-157 (VRAP…RMRG). Over residues 135 to 148 (PSTKPSKTSSSNNP) the composition is skewed to low complexity.

This sequence to M.pneumoniae MPN_091 and MPN_413.

This is an uncharacterized protein from Mycoplasma pneumoniae (strain ATCC 29342 / M129 / Subtype 1) (Mycoplasmoides pneumoniae).